The chain runs to 173 residues: MELKMLRKIINNIEEIITVPLMAALLAVLTWQIGTRWLLNDPSLWSEELARLLFMYMCLVGCAIAIKRSSHVNITFFSDKLPEKARLSLVLSLEIAVLVSIGAIIVLGYQHAQRNAFFELITLGISSSWMNYSLPVGGVFMVFRQLEKIFNLMKLLLGVSSSASLIDQQVTER.

A run of 4 helical transmembrane segments spans residues 13-33, 46-66, 87-107, and 123-143; these read IEEI…TWQI, SEEL…AIAI, LSLV…IIVL, and LGIS…FMVF.

It belongs to the TRAP transporter small permease family. In terms of assembly, the complex comprises the extracytoplasmic solute receptor protein SiaP, and the two transmembrane proteins SiaQ and SiaM. SiaQ and SiaM form a tight 1:1 complex.

The protein localises to the cell inner membrane. Functionally, part of the tripartite ATP-independent periplasmic (TRAP) transport system SiaPQM that catalyzes unidirectional Na(+)-dependent sialic acid uptake. This Vibrio cholerae serotype O1 (strain ATCC 39315 / El Tor Inaba N16961) protein is Sialic acid TRAP transporter small permease protein SiaQ.